Consider the following 305-residue polypeptide: ATP-dependent Clp protease proteolytic subunit-related protein 4, chloroplastic (305 aa).

The N-terminal 68 residues, 1-68 (MEVAAATATS…SSDLCGAKLR (68 aa)), are a transit peptide targeting the chloroplast.

It belongs to the peptidase S14 family. In terms of assembly, component of the chloroplastic Clp protease core complex which consist of at least 16 proteins: CLPP4 (3 copies), CLPP5 (3 copies), CLPR4 (2 copies), ClpP1 (1 copy), CLPP6 (1 copy), CLPR2 (1 copy), CLPT1 (1 copy), CLPT2 (1 copy) and 3 copies of CLPP3 and/or CLPR1 and/or CLPR3. The core complex is organized in two heptameric rings, one containing CLPP3,4,5,6 in a 1:2:3:1 ratio and the other CLPP1 and CLPR1,2,3,4 in a 3:1:1:1:1 ratio.

Its subcellular location is the plastid. The protein resides in the chloroplast. In terms of biological role, involved in plastid protein homeostasis. This is ATP-dependent Clp protease proteolytic subunit-related protein 4, chloroplastic from Arabidopsis thaliana (Mouse-ear cress).